Consider the following 530-residue polypeptide: Putative sulfate transporter YvdB (530 aa).

Helical transmembrane passes span 19-39 (LIAG…FAIA), 41-61 (GVEP…ISLF), 68-88 (IGGP…QYGL), 91-111 (LLIA…FKLG), 121-141 (VIVG…IANF), 164-184 (LGTF…ILLV), 192-212 (VPGA…FFPD), 241-261 (MVML…ESIL), 313-333 (AVSP…LLVF), and 384-404 (VLFD…VFFI). Residues 420–530 (PVLAKREDPS…FFDHHDEITG (111 aa)) form the STAS domain.

This sequence belongs to the SLC26A/SulP transporter (TC 2.A.53) family.

It is found in the cell membrane. This Bacillus subtilis (strain 168) protein is Putative sulfate transporter YvdB (yvdB).